Reading from the N-terminus, the 1068-residue chain is WD repeat-containing protein on Y chromosome (1068 aa).

WD repeat units follow at residues 155–199 (DEVT…IRTA), 201–242 (SESI…RGPF), 322–361 (RIPL…EPSA), 365–404 (GHNG…LLQT), 455–494 (THAA…RKII), 507–546 (IIDI…VVRN), and 594–634 (FHTD…RRYS). The tract at residues 657–687 (SKRLASRPTPGNHGLQMGRAGRSTVLNRPED) is disordered. 2 WD repeats span residues 746-785 (KTGD…VPET) and 829-868 (GHLK…LGTL). The disordered stretch occupies residues 1026 to 1068 (SAINIKQPSRRRSDKTNDTRNVRTPRARDLIALEMSSSHASQS). The span at 1039–1056 (DKTNDTRNVRTPRARDLI) shows a compositional bias: basic and acidic residues.

This Drosophila yakuba (Fruit fly) protein is WD repeat-containing protein on Y chromosome.